We begin with the raw amino-acid sequence, 257 residues long: NAD-capped RNA hydrolase NudC (257 aa).

Arg-69 lines the substrate pocket. Positions 98 and 101 each coordinate Zn(2+). A substrate-binding site is contributed by Glu-111. The Zn(2+) site is built by Cys-116 and Cys-119. Substrate is bound at residue Tyr-124. Residues 125–248 (PQIAPCIIVA…TVARRLIEDT (124 aa)) form the Nudix hydrolase domain. A divalent metal cation is bound by residues Ala-158, Glu-174, and Glu-178. Residues 159–180 (GFVEVGETLEQAVAREVMEESG) carry the Nudix box motif. A substrate-binding site is contributed by 192 to 199 (QPWPFPQS). Glu-219 lines the a divalent metal cation pocket. Position 241 (Ala-241) interacts with substrate.

Belongs to the Nudix hydrolase family. NudC subfamily. As to quaternary structure, homodimer. It depends on Mg(2+) as a cofactor. The cofactor is Mn(2+). Requires Zn(2+) as cofactor.

The enzyme catalyses a 5'-end NAD(+)-phospho-ribonucleoside in mRNA + H2O = a 5'-end phospho-adenosine-phospho-ribonucleoside in mRNA + beta-nicotinamide D-ribonucleotide + 2 H(+). It carries out the reaction NAD(+) + H2O = beta-nicotinamide D-ribonucleotide + AMP + 2 H(+). The catalysed reaction is NADH + H2O = reduced beta-nicotinamide D-ribonucleotide + AMP + 2 H(+). In terms of biological role, mRNA decapping enzyme that specifically removes the nicotinamide adenine dinucleotide (NAD) cap from a subset of mRNAs by hydrolyzing the diphosphate linkage to produce nicotinamide mononucleotide (NMN) and 5' monophosphate mRNA. The NAD-cap is present at the 5'-end of some mRNAs and stabilizes RNA against 5'-processing. Has preference for mRNAs with a 5'-end purine. Catalyzes the hydrolysis of a broad range of dinucleotide pyrophosphates. The polypeptide is NAD-capped RNA hydrolase NudC (Citrobacter koseri (strain ATCC BAA-895 / CDC 4225-83 / SGSC4696)).